Reading from the N-terminus, the 342-residue chain is Heat-inducible transcription repressor HrcA (342 aa).

The protein belongs to the HrcA family.

Functionally, negative regulator of class I heat shock genes (grpE-dnaK-dnaJ and groELS operons). Prevents heat-shock induction of these operons. This Methylibium petroleiphilum (strain ATCC BAA-1232 / LMG 22953 / PM1) protein is Heat-inducible transcription repressor HrcA.